We begin with the raw amino-acid sequence, 61 residues long: Small ribosomal subunit protein uS14 (61 aa).

The Zn(2+) site is built by Cys24, Cys27, Cys40, and Cys43.

The protein belongs to the universal ribosomal protein uS14 family. Zinc-binding uS14 subfamily. Part of the 30S ribosomal subunit. Contacts proteins S3 and S10. It depends on Zn(2+) as a cofactor.

Functionally, binds 16S rRNA, required for the assembly of 30S particles and may also be responsible for determining the conformation of the 16S rRNA at the A site. The polypeptide is Small ribosomal subunit protein uS14 (Acidothermus cellulolyticus (strain ATCC 43068 / DSM 8971 / 11B)).